The primary structure comprises 109 residues: Large ribosomal subunit protein uL22 (109 aa).

Belongs to the universal ribosomal protein uL22 family. In terms of assembly, part of the 50S ribosomal subunit.

Its function is as follows. This protein binds specifically to 23S rRNA; its binding is stimulated by other ribosomal proteins, e.g. L4, L17, and L20. It is important during the early stages of 50S assembly. It makes multiple contacts with different domains of the 23S rRNA in the assembled 50S subunit and ribosome. Functionally, the globular domain of the protein is located near the polypeptide exit tunnel on the outside of the subunit, while an extended beta-hairpin is found that lines the wall of the exit tunnel in the center of the 70S ribosome. The chain is Large ribosomal subunit protein uL22 from Psychrobacter cryohalolentis (strain ATCC BAA-1226 / DSM 17306 / VKM B-2378 / K5).